The primary structure comprises 313 residues: Olfactory receptor 51A4 (313 aa).

The Extracellular portion of the chain corresponds to 1–27 (MSIINTSYVEITTFFLVGMPGLEYAHI). N-linked (GlcNAc...) asparagine glycosylation occurs at Asn-5. Residues 28–48 (WISIPICSMYLIAILGNGTIL) traverse the membrane as a helical segment. Residues 49–56 (FIIKTEPS) are Cytoplasmic-facing. A helical transmembrane segment spans residues 57–77 (LHEPMYYFLSMLAMSDLGLSL). The Extracellular portion of the chain corresponds to 78–101 (SSLPTVLSIFLFNAPEISSNACFA). Cys-99 and Cys-191 form a disulfide bridge. Residues 102–122 (QEFFIHGFSVLESSVLLIMSF) form a helical membrane-spanning segment. Residues 123–141 (DRFLAIHNPLRYTSILTTV) lie on the Cytoplasmic side of the membrane. The chain crosses the membrane as a helical span at residues 142 to 162 (RVAQIGIVFSFKSMLLVLPFP). The Extracellular portion of the chain corresponds to 163–198 (FTLRNLRYCKKNQLSHSYCLHQDVMKLACSDNRIDV). Residues 199–218 (IYGFFGALCLMVDFILIAVS) form a helical membrane-spanning segment. The Cytoplasmic segment spans residues 219–238 (YTLILKTVLGIASKKEQLKA). Residues 239–259 (LNTCVSHICAVIIFYLPIINL) traverse the membrane as a helical segment. The Extracellular segment spans residues 260 to 274 (AVVHRFARHVSPLIN). Residues 275–295 (VLMANVLLLVPPLTNPIVYCV) form a helical membrane-spanning segment. The Cytoplasmic segment spans residues 296 to 313 (KTKQIRVRVVAKLCQRKI).

It belongs to the G-protein coupled receptor 1 family.

The protein localises to the cell membrane. Odorant receptor. The protein is Olfactory receptor 51A4 (OR51A4) of Homo sapiens (Human).